Reading from the N-terminus, the 170-residue chain is Prenyl-diphosphate phosphatase (170 aa).

Residues 25-155 enclose the Nudix hydrolase domain; the sequence is HIHRASQLIL…PGNYTPALRE (131 aa). The Nudix box motif lies at 59–83; that stretch reads YSVSGTVADESYEACIAREMLEEIG. Residues Glu77 and Glu81 each coordinate Mg(2+).

This sequence belongs to the Nudix hydrolase family. Mg(2+) serves as cofactor.

The enzyme catalyses dimethylallyl diphosphate + H2O = dimethylallyl phosphate + phosphate + H(+). It catalyses the reaction isopentenyl diphosphate + H2O = isopentenyl phosphate + phosphate + H(+). It carries out the reaction (2E,6E)-farnesyl diphosphate + H2O = (2E,6E)-farnesyl phosphate + phosphate + H(+). The catalysed reaction is (2E)-geranyl diphosphate + H2O = (2E)-geranyl phosphate + phosphate + H(+). The protein operates within isoprenoid biosynthesis. Functionally, hydrolyzes homoallylic isopentenyl diphosphate (IPP), its allylic isomer dimethylallyl diphosphate (DMAPP) and short-chain prenyl diphosphates geranyl diphosphate (GPP) and farnesyl diphosphate (FPP) to their corresponding monophosphate forms with high activity. The preferred substrate is IPP. ADP, NADPH, Ap5A and thiamine diphosphate (TPP) are weakly hydrolyzed. No hydrolysis with ATP, dNTPs, 8-OH-dGTP, NAD+, FAD or acetyl-CoA. The likely physiological role of this enzyme is to provide a substrate dimethylallyl phosphate (DMAP) for prenylated flavin mononucleotide (prenyl-FMN) synthase MM_1871 involved in the biosynthesis of prenyl-FMN, a coenzyme required in the archaea-specific mevalonate pathway. This Methanosarcina mazei (strain ATCC BAA-159 / DSM 3647 / Goe1 / Go1 / JCM 11833 / OCM 88) (Methanosarcina frisia) protein is Prenyl-diphosphate phosphatase.